We begin with the raw amino-acid sequence, 304 residues long: Probable endonuclease 4 (304 aa).

Zn(2+) contacts are provided by His-75, His-115, Glu-151, Asp-185, His-188, His-221, Asp-234, His-236, and Glu-266.

The protein belongs to the AP endonuclease 2 family. It depends on Zn(2+) as a cofactor.

The catalysed reaction is Endonucleolytic cleavage to 5'-phosphooligonucleotide end-products.. Its function is as follows. Endonuclease IV plays a role in DNA repair. It cleaves phosphodiester bonds at apurinic or apyrimidinic (AP) sites, generating a 3'-hydroxyl group and a 5'-terminal sugar phosphate. The chain is Probable endonuclease 4 from Ureaplasma urealyticum serovar 10 (strain ATCC 33699 / Western).